The following is a 274-amino-acid chain: Elongation factor Ts (274 aa).

The segment at 79 to 82 is involved in Mg(2+) ion dislocation from EF-Tu; that stretch reads TDFV.

This sequence belongs to the EF-Ts family.

The protein resides in the cytoplasm. Associates with the EF-Tu.GDP complex and induces the exchange of GDP to GTP. It remains bound to the aminoacyl-tRNA.EF-Tu.GTP complex up to the GTP hydrolysis stage on the ribosome. The sequence is that of Elongation factor Ts from Azobacteroides pseudotrichonymphae genomovar. CFP2.